The sequence spans 329 residues: DNA-directed RNA polymerase subunit alpha (329 aa).

The tract at residues 1–235 (MVREKVKVST…DLFIPFLHTE (235 aa)) is alpha N-terminal domain (alpha-NTD). The interval 269–329 (IALKYIFIDQ…KQILGILEKK (61 aa)) is alpha C-terminal domain (alpha-CTD).

The protein belongs to the RNA polymerase alpha chain family. In terms of assembly, in plastids the minimal PEP RNA polymerase catalytic core is composed of four subunits: alpha, beta, beta', and beta''. When a (nuclear-encoded) sigma factor is associated with the core the holoenzyme is formed, which can initiate transcription.

The protein resides in the plastid. It localises to the chloroplast. The catalysed reaction is RNA(n) + a ribonucleoside 5'-triphosphate = RNA(n+1) + diphosphate. DNA-dependent RNA polymerase catalyzes the transcription of DNA into RNA using the four ribonucleoside triphosphates as substrates. The sequence is that of DNA-directed RNA polymerase subunit alpha from Gossypium hirsutum (Upland cotton).